We begin with the raw amino-acid sequence, 102 residues long: Small ribosomal subunit protein uS10 (102 aa).

It belongs to the universal ribosomal protein uS10 family. In terms of assembly, part of the 30S ribosomal subunit.

In terms of biological role, involved in the binding of tRNA to the ribosomes. This chain is Small ribosomal subunit protein uS10, found in Clavibacter michiganensis subsp. michiganensis (strain NCPPB 382).